A 90-amino-acid polypeptide reads, in one-letter code: Small ribosomal subunit protein uS17m (90 aa).

It belongs to the universal ribosomal protein uS17 family. Component of the mitochondrial small ribosomal subunit (mt-SSU). Mature yeast 74S mitochondrial ribosomes consist of a small (37S) and a large (54S) subunit. The 37S small subunit contains a 15S ribosomal RNA (15S mt-rRNA) and at least 32 different proteins. The 54S large subunit contains a 21S rRNA (21S mt-rRNA) and at least 45 different proteins.

It is found in the mitochondrion. Component of the mitochondrial ribosome (mitoribosome), a dedicated translation machinery responsible for the synthesis of mitochondrial genome-encoded proteins, including at least some of the essential transmembrane subunits of the mitochondrial respiratory chain. The mitoribosomes are attached to the mitochondrial inner membrane and translation products are cotranslationally integrated into the membrane. uS17m may have a meiosis-specific role as it accumulates during the middle stage of sporulation. The polypeptide is Small ribosomal subunit protein uS17m (Schizosaccharomyces pombe (strain 972 / ATCC 24843) (Fission yeast)).